Here is a 263-residue protein sequence, read N- to C-terminus: Trans-aconitate 2-methyltransferase (263 aa).

It belongs to the methyltransferase superfamily. Tam family.

It localises to the cytoplasm. It catalyses the reaction trans-aconitate + S-adenosyl-L-methionine = (E)-3-(methoxycarbonyl)pent-2-enedioate + S-adenosyl-L-homocysteine. In terms of biological role, catalyzes the S-adenosylmethionine monomethyl esterification of trans-aconitate. This is Trans-aconitate 2-methyltransferase from Mycobacterium marinum (strain ATCC BAA-535 / M).